Reading from the N-terminus, the 309-residue chain is Taste receptor type 2 member 124 (309 aa).

Topologically, residues 1–7 (MVSVLHS) are extracellular. A helical transmembrane segment spans residues 8 to 28 (ISTIIIIAEFVWGNLSNGLIV). At 29 to 46 (LKNCLDWINIKELSTLDQ) the chain is on the cytoplasmic side. A helical membrane pass occupies residues 47-67 (ILILLAISRISLIWETLLMWV). The Extracellular portion of the chain corresponds to 68-81 (KDKLISSITIEELK). A helical membrane pass occupies residues 82-102 (MIMFSFMLSSHFSLWLATALS). Residues 103 to 127 (TFYLFRIANCSWQIFLYLKWRLKHL) lie on the Cytoplasmic side of the membrane. The helical transmembrane segment at 128-148 (IVQMLLGSVMFLIANIIQITI) threads the bilayer. The Extracellular segment spans residues 149 to 182 (TLEKRFYQYKGNTSVNSIQNEFALLIEMMLFNMT). N-linked (GlcNAc...) asparagine glycans are attached at residues Asn-160 and Asn-180. Residues 183–203 (IFSVIPFLLALISFFLLIFSL) traverse the membrane as a helical segment. Over 204–227 (WKHLQRMQLNSREDRDPSTKAHRN) the chain is Cytoplasmic. A helical transmembrane segment spans residues 228 to 248 (ALGIMVSFLLLYTMYVLSLLI). At 249 to 261 (SWIAQKNQSELVH) the chain is on the extracellular side. Asn-255 carries an N-linked (GlcNAc...) asparagine glycan. Residues 262 to 282 (IICMITSLLNPSVHSSILILG) traverse the membrane as a helical segment. At 283–309 (NFKLKQSSLCILRHLGCRLKSQNTPTT) the chain is on the cytoplasmic side.

The protein belongs to the G-protein coupled receptor T2R family.

The protein resides in the membrane. Its function is as follows. Putative taste receptor which may play a role in the perception of bitterness. The sequence is that of Taste receptor type 2 member 124 from Rattus norvegicus (Rat).